The chain runs to 85 residues: N.vectensis toxin 1 4 (85 aa).

An N-terminal signal peptide occupies residues 1 to 20 (MASFKIVIVCLALLVAVASA). Positions 21–36 (RRRDMMSDDELDYHYS) are excised as a propeptide. Disulfide bonds link Cys42-Cys82, Cys44-Cys72, and Cys65-Cys83.

The protein belongs to the sea anemone sodium channel inhibitory toxin family. Type II subfamily. Expressed in ectodermal glands and in clumps outside of the extodermal layer. Is not expressed in nematocytes. In adult female tissues, shows similar expression levels in mesenteries (gametes-producing tissue), tentacles, pharynx and physa.

It is found in the secreted. Binds to site 3 of voltage-gated sodium channels and inhibits the inactivation process. Is highly active on DmNav1/TipE (drosophila) and is only extremely weakly active on rat Nav1.4-beta-1/SCN4A-SCN1B, and on human Nav1.5-beta-1/SCN5A-beta-1. This reveals high specificity for arthropod over mammalian channels. In vivo, when released into the medium, this recombinant toxin induces impaired swimming, paralysis and death of the crustacean A.nauplii within several hours. Also causes paralysis of cherry shrimps immediately after injection at very low doses. Its effect on zebrafish (D.rerio) larvae is also rapid, since it induces tail twitching accompanied by impaired swimming after 20 minutes and complete paralysis within 45 minutes. It has also been observed to cause death of zebrafish larvae within 1 hour. This chain is N.vectensis toxin 1 4, found in Nematostella vectensis (Starlet sea anemone).